The primary structure comprises 376 residues: N-acetyldiaminopimelate deacetylase (376 aa).

Asp69 is a catalytic residue. Glu128 (proton acceptor) is an active-site residue.

Belongs to the peptidase M20A family. N-acetyldiaminopimelate deacetylase subfamily.

The enzyme catalyses N-acetyl-(2S,6S)-2,6-diaminopimelate + H2O = (2S,6S)-2,6-diaminopimelate + acetate. The protein operates within amino-acid biosynthesis; L-lysine biosynthesis via DAP pathway; LL-2,6-diaminopimelate from (S)-tetrahydrodipicolinate (acetylase route): step 3/3. Its function is as follows. Catalyzes the conversion of N-acetyl-diaminopimelate to diaminopimelate and acetate. The chain is N-acetyldiaminopimelate deacetylase from Bacillus cereus (strain ATCC 14579 / DSM 31 / CCUG 7414 / JCM 2152 / NBRC 15305 / NCIMB 9373 / NCTC 2599 / NRRL B-3711).